We begin with the raw amino-acid sequence, 291 residues long: Protease HtpX (291 aa).

A run of 2 helical transmembrane segments spans residues 4-24 (IVIFLLTNLAVMVVFGILLTC) and 37-57 (IISGLFGFCGAFISLLMSKFI). Zn(2+) is bound at residue H139. E140 is an active-site residue. H143 is a binding site for Zn(2+). The next 2 membrane-spanning stretches (helical) occupy residues 147 to 167 (GDMVTITLISGIVNTFVIFIS) and 195 to 215 (IVSTILELAFGILASIIVLWF). E220 provides a ligand contact to Zn(2+).

It belongs to the peptidase M48B family. Requires Zn(2+) as cofactor.

It localises to the cell membrane. The chain is Protease HtpX from Baumannia cicadellinicola subsp. Homalodisca coagulata.